A 974-amino-acid polypeptide reads, in one-letter code: Apical junction component 1 homolog (974 aa).

Disordered regions lie at residues 23–137 (PGLT…PSYP), 201–233 (ARSS…PRHV), and 306–326 (CSRP…GGSY). Serine 52 bears the Phosphoserine mark. A compositionally biased stretch (pro residues) spans 69 to 79 (EPPPPEPAPPR). Residues 116–134 (RGREAQRAVRVEGSPRREP) show a composition bias toward basic and acidic residues. Serine 129 is modified (phosphoserine). The segment covering 201–216 (ARSSRSCAPRETTSWA) has biased composition (polar residues). Arginine 322 is subject to Omega-N-methylarginine. Residues serine 468, serine 509, and serine 512 each carry the phosphoserine modification. Positions 539 to 576 (DLRSVDRPTAKGWELPGGRPRQPVSTVPEGPASSRQRS) are disordered. Serine 593 is modified (phosphoserine). Residues 618–661 (AGPGGATLLAPSRSPPASAGSTEEPTGSGEAADASPEPSADEDD) are disordered. The segment covering 623 to 636 (ATLLAPSRSPPASA) has biased composition (low complexity). Arginine 749 bears the Asymmetric dimethylarginine; alternate mark. Arginine 749 is modified (omega-N-methylarginine; alternate).

The protein resides in the apical cell membrane. The protein localises to the cell projection. It is found in the cilium. It localises to the cell junction. Its subcellular location is the adherens junction. In terms of biological role, may be involved in the control of adherens junction integrity. The chain is Apical junction component 1 homolog (Ajm1) from Mus musculus (Mouse).